A 476-amino-acid polypeptide reads, in one-letter code: Trigger factor (476 aa).

In terms of domain architecture, PPIase FKBP-type spans 169 to 254; sequence GDKVTLDYVG…VKEVAAAEEL (86 aa). Positions 437–476 are disordered; sequence SRDELLAEDEAEGEEKKAAGETKKKAAPKKKAAKKESAAE. Over residues 450 to 460 the composition is skewed to basic and acidic residues; that stretch reads EEKKAAGETKK.

It belongs to the FKBP-type PPIase family. Tig subfamily.

It localises to the cytoplasm. The catalysed reaction is [protein]-peptidylproline (omega=180) = [protein]-peptidylproline (omega=0). Its function is as follows. Involved in protein export. Acts as a chaperone by maintaining the newly synthesized protein in an open conformation. Functions as a peptidyl-prolyl cis-trans isomerase. The polypeptide is Trigger factor (Chelativorans sp. (strain BNC1)).